The chain runs to 523 residues: Dynein regulatory complex subunit 3 (523 aa).

LRR repeat units follow at residues 44–65 (DVLSLQLDFRNILRIDNLWQFE), 66–87 (NLRKLQLDNNIIEKIEGLENLA), 88–109 (HLVWLDLSFNNIETIEGLDTLV), 110–131 (NLEDLSLFNNRISKIDSLDALV), and 132–153 (KLQVLSLGNNRIDNMMNIIYLR). An LRRCT domain is found at 166–204 (NPISEAEDYKMFICAYLPDLMYLDYRRIDDHTKKLAEAK). Coiled-coil stretches lie at residues 208-242 (SIDELKHQENLMQAQLEDEQAQREELEKHKTAFVE) and 366-391 (MTLEMQLVEQLEETINMFERNIVDMV).

This sequence belongs to the DRC3 family. In terms of assembly, component of the nexin-dynein regulatory complex (N-DRC). Interacts with DRC1. Interacts with TCTE1/DRC5. Interacts with DRC7.

The protein resides in the cytoplasm. Its subcellular location is the cytoskeleton. The protein localises to the cilium axoneme. It is found in the cell projection. It localises to the cilium. The protein resides in the flagellum axoneme. Its subcellular location is the flagellum. In terms of biological role, component of the nexin-dynein regulatory complex (N-DRC) a key regulator of ciliary/flagellar motility which maintains the alignment and integrity of the distal axoneme and regulates microtubule sliding in motile axonemes. This Homo sapiens (Human) protein is Dynein regulatory complex subunit 3 (DRC3).